A 358-amino-acid polypeptide reads, in one-letter code: Ribosomal RNA large subunit methyltransferase M (358 aa).

S-adenosyl-L-methionine-binding positions include S183, 216–219 (APGG), D235, D255, and D271. K300 serves as the catalytic Proton acceptor.

The protein belongs to the class I-like SAM-binding methyltransferase superfamily. RNA methyltransferase RlmE family. RlmM subfamily. In terms of assembly, monomer.

The protein localises to the cytoplasm. It carries out the reaction cytidine(2498) in 23S rRNA + S-adenosyl-L-methionine = 2'-O-methylcytidine(2498) in 23S rRNA + S-adenosyl-L-homocysteine + H(+). Its function is as follows. Catalyzes the 2'-O-methylation at nucleotide C2498 in 23S rRNA. This Pseudomonas fluorescens (strain SBW25) protein is Ribosomal RNA large subunit methyltransferase M.